The primary structure comprises 295 residues: UDP-3-O-acyl-N-acetylglucosamine deacetylase (295 aa).

Residues His-75, His-232, and Asp-236 each coordinate Zn(2+). The active-site Proton donor is the His-259.

This sequence belongs to the LpxC family. Zn(2+) serves as cofactor.

It carries out the reaction a UDP-3-O-[(3R)-3-hydroxyacyl]-N-acetyl-alpha-D-glucosamine + H2O = a UDP-3-O-[(3R)-3-hydroxyacyl]-alpha-D-glucosamine + acetate. Its pathway is glycolipid biosynthesis; lipid IV(A) biosynthesis; lipid IV(A) from (3R)-3-hydroxytetradecanoyl-[acyl-carrier-protein] and UDP-N-acetyl-alpha-D-glucosamine: step 2/6. In terms of biological role, catalyzes the hydrolysis of UDP-3-O-myristoyl-N-acetylglucosamine to form UDP-3-O-myristoylglucosamine and acetate, the committed step in lipid A biosynthesis. The protein is UDP-3-O-acyl-N-acetylglucosamine deacetylase of Helicobacter pylori (strain J99 / ATCC 700824) (Campylobacter pylori J99).